We begin with the raw amino-acid sequence, 221 residues long: Veficolin-1 (221 aa).

The first 25 residues, 1–25, serve as a signal peptide directing secretion; that stretch reads MTAWLDFPLALSPLVVVSMKGGSFG. Residues 50 to 104 enclose the Collagen-like domain; that stretch reads QGQAGIPGIPGVPGTNGLPGAKGDLGPQGPPGERGSTGIPGKAGPKGDKGDQGEA. The interval 54–104 is disordered; sequence GIPGIPGVPGTNGLPGAKGDLGPQGPPGERGSTGIPGKAGPKGDKGDQGEA. In terms of domain architecture, Fibrinogen C-terminal spans 111-221; sequence QQQEAGAKDC…DFNNSKTFAK (111 aa). Cys120 and Cys148 are joined by a disulfide.

Belongs to the ficolin lectin family. Veficolin subfamily. In terms of tissue distribution, expressed by the mandibular venom duct.

It is found in the secreted. Its function is as follows. Initiates complement activation and/or interferes in platelet aggregation and/or blood coagulation. In Varanus komodoensis (Komodo dragon), this protein is Veficolin-1.